The chain runs to 173 residues: Nicotinamide-nucleotide adenylyltransferase (173 aa).

It belongs to the archaeal NMN adenylyltransferase family.

The protein resides in the cytoplasm. The enzyme catalyses beta-nicotinamide D-ribonucleotide + ATP + H(+) = diphosphate + NAD(+). The protein operates within cofactor biosynthesis; NAD(+) biosynthesis; NAD(+) from nicotinamide D-ribonucleotide: step 1/1. This chain is Nicotinamide-nucleotide adenylyltransferase, found in Methanosarcina barkeri (strain Fusaro / DSM 804).